The sequence spans 442 residues: tRNA modification GTPase MnmE (442 aa).

The (6S)-5-formyl-5,6,7,8-tetrahydrofolate site is built by R24, E82, and K120. In terms of domain architecture, TrmE-type G spans 217–367 (GLHIVITGEP…LISLIKKKAE (151 aa)). Residues 227–232 (NVGKST), 246–252 (SEYAGTT), and 271–274 (DTAG) contribute to the GTP site. S231 lines the Mg(2+) pocket. S246 is a K(+) binding site. T252 lines the Mg(2+) pocket. Position 442 (K442) interacts with (6S)-5-formyl-5,6,7,8-tetrahydrofolate.

The protein belongs to the TRAFAC class TrmE-Era-EngA-EngB-Septin-like GTPase superfamily. TrmE GTPase family. In terms of assembly, homodimer. Heterotetramer of two MnmE and two MnmG subunits. Requires K(+) as cofactor.

The protein resides in the cytoplasm. Its function is as follows. Exhibits a very high intrinsic GTPase hydrolysis rate. Involved in the addition of a carboxymethylaminomethyl (cmnm) group at the wobble position (U34) of certain tRNAs, forming tRNA-cmnm(5)s(2)U34. This Wolbachia pipientis subsp. Culex pipiens (strain wPip) protein is tRNA modification GTPase MnmE.